The primary structure comprises 281 residues: Cell growth regulator with EF hand domain protein 1 (281 aa).

The N-terminal stretch at 1–21 (MFQWLMQALMLPLLLLPLGRA) is a signal peptide. 2 consecutive EF-hand domains span residues 71 to 106 (DREQVLLSLFALHDYDQNGQLDGLELLSMLTAALAP) and 115 to 150 (PVILVVDSVLETQDLDGDGLMTPAELINFPEVPKHT). Ca(2+) is bound by residues Asp84, Asp86, Asn88, Gln90, Glu95, Asp128, Asp130, Asp132, and Glu139. The disordered stretch occupies residues 148 to 281 (KHTESLPPAL…HSIQLENDEI (134 aa)). Over residues 168–183 (LLANSPLQSETQQSLG) the composition is skewed to polar residues. Positions 184-213 (TKEEIRGQVEAKRASLEPEQEAGHQTEGKV) are enriched in basic and acidic residues. Phosphoserine is present on residues Ser217 and Ser228. Positions 237–256 (EGAEEQVEIKDNEGEAKELL) are enriched in basic and acidic residues.

Probably digested extracellularly by an unknown serine protease generating extremely hydrophobic bioactive peptides.

It localises to the secreted. Functionally, mediates cell-cell adhesion in a calcium-dependent manner. Able to inhibit growth in several cell lines. In Mus musculus (Mouse), this protein is Cell growth regulator with EF hand domain protein 1.